Here is a 316-residue protein sequence, read N- to C-terminus: MYSRILATGSYIPANIRTNADLEKMVETSDEWITTRSGIKERRIAGENETVATMGFKAAKNALQLANICPNDIDLVLVATTSHSYAYPSAACQIQGMLDIDDAISFDLAAACTGFIYALSVADQFIKTGKVKKALVIGADINSRKLDETDRSTVILFGDGAGAVILESSDIEGIISTHLHASLDKSNALILPQTQHGEAQSGYIQMQGNATFKLAVRELSNVVEETLRDNHLDKADLDWLVPHQANLRIITATAEKLNMSLDQVVITLDKYGNTSAATVPVALDEAVRDGRIKRGQLLLLEAFGGGWTWGSALVRF.

Residues cysteine 112 and histidine 243 contribute to the active site. Residues 244–248 are ACP-binding; sequence QANLR. Asparagine 273 is a catalytic residue.

The protein belongs to the thiolase-like superfamily. FabH family. As to quaternary structure, homodimer.

It is found in the cytoplasm. It catalyses the reaction malonyl-[ACP] + acetyl-CoA + H(+) = 3-oxobutanoyl-[ACP] + CO2 + CoA. It participates in lipid metabolism; fatty acid biosynthesis. Catalyzes the condensation reaction of fatty acid synthesis by the addition to an acyl acceptor of two carbons from malonyl-ACP. Catalyzes the first condensation reaction which initiates fatty acid synthesis and may therefore play a role in governing the total rate of fatty acid production. Possesses both acetoacetyl-ACP synthase and acetyl transacylase activities. Its substrate specificity determines the biosynthesis of branched-chain and/or straight-chain of fatty acids. This chain is Beta-ketoacyl-[acyl-carrier-protein] synthase III, found in Histophilus somni (strain 129Pt) (Haemophilus somnus).